The chain runs to 190 residues: Shikimate kinase (190 aa).

Residue 22–27 (GSGKST) participates in ATP binding. S26 contacts Mg(2+). D44, R68, and G90 together coordinate substrate. R127 contacts ATP. A substrate-binding site is contributed by R146.

The protein belongs to the shikimate kinase family. In terms of assembly, monomer. Requires Mg(2+) as cofactor.

The protein resides in the cytoplasm. It catalyses the reaction shikimate + ATP = 3-phosphoshikimate + ADP + H(+). It functions in the pathway metabolic intermediate biosynthesis; chorismate biosynthesis; chorismate from D-erythrose 4-phosphate and phosphoenolpyruvate: step 5/7. Catalyzes the specific phosphorylation of the 3-hydroxyl group of shikimic acid using ATP as a cosubstrate. This is Shikimate kinase from Microcystis aeruginosa (strain NIES-843 / IAM M-2473).